Reading from the N-terminus, the 322-residue chain is DNA repair and recombination protein RadA (322 aa).

105-112 contributes to the ATP binding site; the sequence is GMYGSGKT.

The protein belongs to the eukaryotic RecA-like protein family.

Involved in DNA repair and in homologous recombination. Binds and assemble on single-stranded DNA to form a nucleoprotein filament. Hydrolyzes ATP in a ssDNA-dependent manner and promotes DNA strand exchange between homologous DNA molecules. This is DNA repair and recombination protein RadA from Methanococcus maripaludis (strain C7 / ATCC BAA-1331).